The sequence spans 526 residues: Phenylacetaldehyde oxime monooxygenase CYP71AN24 (526 aa).

Residues 22-42 (SFNIFLVPILCLSIFILFSLT) traverse the membrane as a helical segment. C465 contacts heme.

This sequence belongs to the cytochrome P450 family. Heme serves as cofactor. As to expression, expressed in seedlings and leaves.

The protein resides in the membrane. It catalyses the reaction (E)-phenylacetaldehyde oxime + reduced [NADPH--hemoprotein reductase] + O2 = (R)-mandelonitrile + oxidized [NADPH--hemoprotein reductase] + 2 H2O + H(+). It carries out the reaction phenylacetonitrile + reduced [NADPH--hemoprotein reductase] + O2 = (R)-mandelonitrile + oxidized [NADPH--hemoprotein reductase] + H2O + H(+). Functionally, involved in L-phenylalanine-derived cyanogenic glycoside biosynthesis, including prunasin and amygdalin defensive agents. Catalyzes the conversion of phenylacetaldoxime (PAOx) and phenylacetonitrile (PAN) into mandelonitrile (MAN). To a lower extent, can convert various aromatic aldoximes and nitriles; mediates the transformation of 4-hydroxyphenylacetaldoxime, 4-hydroxyphenylacetonitrile, indole-3-acetal-doxime and indole-3-acetonitrile into the corresponding hydroxynitriles, but cannot use the aliphatic compounds 2-methylpropanaloxime and 2-methylpropanenitrile as substrates. This is Phenylacetaldehyde oxime monooxygenase CYP71AN24 from Prunus mume (Japanese apricot).